The chain runs to 318 residues: 2-methyl-6-phytyl-1,4-hydroquinone methyltransferase (318 aa).

The N-terminal stretch at 1–39 (MPEYLLLPAGLISLSLAIAAGLYLLTARGYQSSDSVANA) is a signal peptide. Residues 97–106 (VLDVGCGIGG) form an SAM motif I region. The interval 157–165 (GSFDVVWSV) is SAM motif II. An SAM motif III region spans residues 184–193 (VVKPGGILVV).

This sequence belongs to the class I-like SAM-binding methyltransferase superfamily. gTMT family.

It catalyses the reaction 2-methyl-6-phytyl-1,4-benzene-1,4-diol + S-adenosyl-L-methionine = 2,3-dimethyl-6-phytylbenzene-1,4-diol + S-adenosyl-L-homocysteine + H(+). The enzyme catalyses 2-methyl-6-(all-trans-nonaprenyl)benzene-1,4-diol + S-adenosyl-L-methionine = plastoquinol-9 + S-adenosyl-L-homocysteine + H(+). The catalysed reaction is 6-geranylgeranyl-2-methylbenzene-1,4-diol + S-adenosyl-L-methionine = 6-geranylgeranyl-2,3-dimethylbenzene-1,4-diol + S-adenosyl-L-homocysteine + H(+). It functions in the pathway cofactor biosynthesis; tocopherol biosynthesis. Its function is as follows. Involved in a key methylation step in both tocopherol (vitamin E) and plastoquinone synthesis. Catalyzes the conversion of 2-methyl-6-phytyl-1,4-hydroquinol (MPBQ) to 2,3-dimethyl-6-phytyl-1,4-hydroquinol (DMPQ, a substrate for tocopherol cyclase), and 2-methyl-6-solanyl-1,4-benzoquinol (MSBQ) to plastoquinol. The polypeptide is 2-methyl-6-phytyl-1,4-hydroquinone methyltransferase (Synechocystis sp. (strain ATCC 27184 / PCC 6803 / Kazusa)).